Consider the following 188-residue polypeptide: MTNPDKQKPVEVTDVETAAEKTSEPTPASGTSTITQRWKREDLIKKASPITRGICLLFSLLAFLIMVSNKHGYGRNFNEYEEYRYVLAISIISTLYTAWQTFAHFSKREFFDRRTSTLVDFSGDQIVAYLLISAASSAIPLTNRFREGQDNIFTDSAASAISMAIFAFVALALSALFSGYKLSTHSFI.

The segment covering 1–11 (MTNPDKQKPVE) has biased composition (basic and acidic residues). The segment at 1 to 34 (MTNPDKQKPVEVTDVETAAEKTSEPTPASGTSTI) is disordered. At 1 to 46 (MTNPDKQKPVEVTDVETAAEKTSEPTPASGTSTITQRWKREDLIKK) the chain is on the cytoplasmic side. A compositionally biased stretch (polar residues) spans 24–34 (EPTPASGTSTI). Residues 47–67 (ASPITRGICLLFSLLAFLIMV) traverse the membrane as a helical segment. Over 68-84 (SNKHGYGRNFNEYEEYR) the chain is Extracellular. The helical transmembrane segment at 85-105 (YVLAISIISTLYTAWQTFAHF) threads the bilayer. Residues 106–120 (SKREFFDRRTSTLVD) lie on the Cytoplasmic side of the membrane. Residues 121 to 141 (FSGDQIVAYLLISAASSAIPL) traverse the membrane as a helical segment. Residues 142 to 156 (TNRFREGQDNIFTDS) lie on the Extracellular side of the membrane. The chain crosses the membrane as a helical span at residues 157–177 (AASAISMAIFAFVALALSALF). The Cytoplasmic segment spans residues 178 to 188 (SGYKLSTHSFI).

The protein belongs to the Casparian strip membrane proteins (CASP) family. In terms of assembly, homodimer and heterodimers.

Its subcellular location is the cell membrane. This is CASP-like protein 4B1 from Arabidopsis lyrata subsp. lyrata (Lyre-leaved rock-cress).